The chain runs to 337 residues: Beta-ketoacyl-[acyl-carrier-protein] synthase III (337 aa).

Active-site residues include C119 and H260. The interval 261–265 is ACP-binding; it reads QANQR. N290 is a catalytic residue.

It belongs to the thiolase-like superfamily. FabH family. As to quaternary structure, homodimer.

It localises to the cytoplasm. It catalyses the reaction malonyl-[ACP] + acetyl-CoA + H(+) = 3-oxobutanoyl-[ACP] + CO2 + CoA. It participates in lipid metabolism; fatty acid biosynthesis. Its function is as follows. Catalyzes the condensation reaction of fatty acid synthesis by the addition to an acyl acceptor of two carbons from malonyl-ACP. Catalyzes the first condensation reaction which initiates fatty acid synthesis and may therefore play a role in governing the total rate of fatty acid production. Possesses both acetoacetyl-ACP synthase and acetyl transacylase activities. Its substrate specificity determines the biosynthesis of branched-chain and/or straight-chain of fatty acids. The protein is Beta-ketoacyl-[acyl-carrier-protein] synthase III of Synechococcus sp. (strain WH7803).